The primary structure comprises 135 residues: Interleukin-4 (135 aa).

The first 24 residues, 1–24 (MGLTYQLIPVLVCLLVCTSHFVHG), serve as a signal peptide directing secretion. 3 disulfides stabilise this stretch: cysteine 27/cysteine 135, cysteine 48/cysteine 85, and cysteine 70/cysteine 105. Asparagine 62 carries an N-linked (GlcNAc...) asparagine glycan.

Belongs to the IL-4/IL-13 family.

The protein localises to the secreted. In terms of biological role, participates in at least several B-cell activation processes as well as of other cell types. It is a costimulator of DNA-synthesis. It induces the expression of class II MHC molecules on resting B-cells. It enhances both secretion and cell surface expression of IgE and IgG1. It also regulates the expression of the low affinity Fc receptor for IgE (CD23) on both lymphocytes and monocytes. Positively regulates IL31RA expression in macrophages. Stimulates autophagy in dendritic cells by interfering with mTORC1 signaling and through the induction of RUFY4. In Bubalus carabanensis (Swamp type water buffalo), this protein is Interleukin-4 (IL4).